The chain runs to 207 residues: Outer-membrane lipoprotein LolB (207 aa).

An N-terminal signal peptide occupies residues 1-21 (MPMRKRHFYRLLPLASLLLAA). Cys-22 is lipidated: N-palmitoyl cysteine. A lipid anchor (S-diacylglycerol cysteine) is attached at Cys-22.

The protein belongs to the LolB family. As to quaternary structure, monomer.

The protein localises to the cell outer membrane. In terms of biological role, plays a critical role in the incorporation of lipoproteins in the outer membrane after they are released by the LolA protein. This chain is Outer-membrane lipoprotein LolB, found in Yersinia pestis bv. Antiqua (strain Antiqua).